We begin with the raw amino-acid sequence, 327 residues long: uncharacterized protein (327 aa).

The helical transmembrane segment at 12–32 (LVVVVVAIAIFTLVLLMLWEG) threads the bilayer. The disordered stretch occupies residues 149–170 (AFSAVETSEGSDQESEGADEQG). Positions 157-167 (EGSDQESEGAD) are enriched in acidic residues. The stretch at 162-227 (ESEGADEQGK…LDEENREVAE (66 aa)) forms a coiled coil.

It is found in the membrane. This is an uncharacterized protein from Encephalitozoon cuniculi (strain GB-M1) (Microsporidian parasite).